Here is a 472-residue protein sequence, read N- to C-terminus: Poly(A) polymerase catalytic subunit (472 aa).

Residues aspartate 194 and aspartate 196 contribute to the active site.

It belongs to the poxviridae poly(A) polymerase catalytic subunit family. In terms of assembly, heterodimer of a large (catalytic) subunit and a small (regulatory) subunit.

The enzyme catalyses RNA(n) + ATP = RNA(n)-3'-adenine ribonucleotide + diphosphate. Polymerase that creates the 3'-poly(A) tail of mRNA's. The sequence is that of Poly(A) polymerase catalytic subunit (PAPL) from Fowlpox virus (strain NVSL) (FPV).